Here is a 307-residue protein sequence, read N- to C-terminus: Small ribosomal subunit biogenesis GTPase RsgA (307 aa).

Positions Met1–Asn21 are disordered. A compositionally biased stretch (polar residues) spans Gly10 to Asn21. Positions Arg85–Phe242 constitute a CP-type G domain. Residues Asn135 to Asp138 and Gly184 to Thr192 each bind GTP. Residues Cys266, Cys271, His273, and Cys279 each coordinate Zn(2+).

This sequence belongs to the TRAFAC class YlqF/YawG GTPase family. RsgA subfamily. As to quaternary structure, monomer. Associates with 30S ribosomal subunit, binds 16S rRNA. It depends on Zn(2+) as a cofactor.

Its subcellular location is the cytoplasm. One of several proteins that assist in the late maturation steps of the functional core of the 30S ribosomal subunit. Helps release RbfA from mature subunits. May play a role in the assembly of ribosomal proteins into the subunit. Circularly permuted GTPase that catalyzes slow GTP hydrolysis, GTPase activity is stimulated by the 30S ribosomal subunit. The sequence is that of Small ribosomal subunit biogenesis GTPase RsgA from Neisseria gonorrhoeae (strain NCCP11945).